The following is a 75-amino-acid chain: DNA-directed RNA polymerase subunit epsilon (75 aa).

Belongs to the RNA polymerase subunit epsilon family. In terms of assembly, RNAP is composed of a core of 2 alpha, a beta and a beta' subunit. The core is associated with a delta subunit, and at least one of epsilon or omega. When a sigma factor is associated with the core the holoenzyme is formed, which can initiate transcription.

The enzyme catalyses RNA(n) + a ribonucleoside 5'-triphosphate = RNA(n+1) + diphosphate. Functionally, a non-essential component of RNA polymerase (RNAP). The chain is DNA-directed RNA polymerase subunit epsilon from Lactobacillus johnsonii (strain CNCM I-12250 / La1 / NCC 533).